The chain runs to 201 residues: Anthranilate synthase component 2 (201 aa).

The Glutamine amidotransferase type-1 domain occupies 1–199; sequence MLLMIDNYDS…LRQQGGVRGE (199 aa). Residue 52 to 54 participates in L-glutamine binding; it reads GPC. Cys-79 serves as the catalytic Nucleophile; for GATase activity. L-glutamine contacts are provided by residues Gln-83 and 129 to 130; that span reads SL. Catalysis depends on for GATase activity residues His-173 and Glu-175.

Heterotetramer consisting of two non-identical subunits: a beta subunit (TrpG) and a large alpha subunit (TrpE).

It carries out the reaction chorismate + L-glutamine = anthranilate + pyruvate + L-glutamate + H(+). It functions in the pathway amino-acid biosynthesis; L-tryptophan biosynthesis; L-tryptophan from chorismate: step 1/5. Part of a heterotetrameric complex that catalyzes the two-step biosynthesis of anthranilate, an intermediate in the biosynthesis of L-tryptophan. In the first step, the glutamine-binding beta subunit (TrpG) of anthranilate synthase (AS) provides the glutamine amidotransferase activity which generates ammonia as a substrate that, along with chorismate, is used in the second step, catalyzed by the large alpha subunit of AS (TrpE) to produce anthranilate. In the absence of TrpG, TrpE can synthesize anthranilate directly from chorismate and high concentrations of ammonia. The chain is Anthranilate synthase component 2 from Pseudomonas aeruginosa (strain ATCC 15692 / DSM 22644 / CIP 104116 / JCM 14847 / LMG 12228 / 1C / PRS 101 / PAO1).